Consider the following 146-residue polypeptide: Hemoglobin subunit beta (146 aa).

V1 bears the N-acetylvaline mark. One can recognise a Globin domain in the interval 2 to 146; the sequence is HLTGEEKTAV…VANALAHKYH (145 aa). T12 is modified (phosphothreonine). S44 is subject to Phosphoserine. K59 is subject to N6-acetyllysine. H63 lines the heme b pocket. K82 is subject to N6-acetyllysine. Residue H92 coordinates heme b. At C93 the chain carries S-nitrosocysteine. K144 bears the N6-acetyllysine mark.

The protein belongs to the globin family. In terms of assembly, heterotetramer of two alpha chains and two beta chains. As to expression, red blood cells.

Functionally, involved in oxygen transport from the lung to the various peripheral tissues. The sequence is that of Hemoglobin subunit beta (HBB) from Nasua nasua (Ring-tailed coati).